We begin with the raw amino-acid sequence, 341 residues long: Ketol-acid reductoisomerase (NADP(+)) (341 aa).

The KARI N-terminal Rossmann domain occupies 1–182 (MATIYYDKDA…GCTRAGVLET (182 aa)). NADP(+) is bound by residues 25-28 (YGSQ), Ser-51, Ser-53, and 83-86 (DQTQ). His-108 is an active-site residue. Residue Gly-134 participates in NADP(+) binding. Residues 183 to 328 (TFKEETETDL…KRLRDMMSWI (146 aa)) enclose the KARI C-terminal knotted domain. Asp-191, Glu-195, Glu-227, and Glu-231 together coordinate Mg(2+). Ser-252 provides a ligand contact to substrate.

This sequence belongs to the ketol-acid reductoisomerase family. Mg(2+) is required as a cofactor.

The enzyme catalyses (2R)-2,3-dihydroxy-3-methylbutanoate + NADP(+) = (2S)-2-acetolactate + NADPH + H(+). The catalysed reaction is (2R,3R)-2,3-dihydroxy-3-methylpentanoate + NADP(+) = (S)-2-ethyl-2-hydroxy-3-oxobutanoate + NADPH + H(+). It participates in amino-acid biosynthesis; L-isoleucine biosynthesis; L-isoleucine from 2-oxobutanoate: step 2/4. The protein operates within amino-acid biosynthesis; L-valine biosynthesis; L-valine from pyruvate: step 2/4. Functionally, involved in the biosynthesis of branched-chain amino acids (BCAA). Catalyzes an alkyl-migration followed by a ketol-acid reduction of (S)-2-acetolactate (S2AL) to yield (R)-2,3-dihydroxy-isovalerate. In the isomerase reaction, S2AL is rearranged via a Mg-dependent methyl migration to produce 3-hydroxy-3-methyl-2-ketobutyrate (HMKB). In the reductase reaction, this 2-ketoacid undergoes a metal-dependent reduction by NADPH to yield (R)-2,3-dihydroxy-isovalerate. The polypeptide is Ketol-acid reductoisomerase (NADP(+)) (Anaeromyxobacter dehalogenans (strain 2CP-C)).